Consider the following 315-residue polypeptide: Adenine deaminase (315 aa).

Zn(2+) contacts are provided by histidine 14, histidine 16, and histidine 194. Glutamate 197 acts as the Proton donor in catalysis. Zn(2+) is bound at residue aspartate 275. Aspartate 276 provides a ligand contact to substrate.

The protein belongs to the metallo-dependent hydrolases superfamily. Adenosine and AMP deaminases family. Adenine deaminase type 2 subfamily. Zn(2+) serves as cofactor.

The catalysed reaction is adenine + H2O + H(+) = hypoxanthine + NH4(+). Its function is as follows. Catalyzes the hydrolytic deamination of adenine to hypoxanthine. Plays an important role in the purine salvage pathway and in nitrogen catabolism. The sequence is that of Adenine deaminase from Pseudomonas putida (strain GB-1).